Consider the following 753-residue polypeptide: MDFDTNEDLNGVRFAWNVFPSSKTDAMQNVVPLGCMYTPLKEIEGLNVVDYNPVVCAGPHCKAILNPYCMIDPRSNSWTCSICKSRNHLPTQYHNLSQENIPIELQQTTVEYLTTKPVQVPPIFLFVVDITTEPDNLQALKESITASLSLLPANALIGLITYGKVVQLHDFSNDTIARCNVFKGDKDYQLEPLVEMLTGQKMTGSIPNTQVTPFSLNRFFLPLEQIEFRFIQVLESLSQDEWSVKPGERPLRATGSALNIASLLLQGCYKNNAARIIVFSSGPDTINPGLIVDLELKNPIRSHHDIDSGNAVHYKKAMKYYNTLADRISENGHTVDLFSGCYDQIGMSEMRKLTDRTGGVLLLTDSFSTAIFKQSYLRLFAKDEDDYMKMSFSAKFQVKSSKELKVQGLIGHASAVKKTSATNISDTTIGIGGTSTWTMGSLLPQHTYAVFFDIASNGPTPVTGDNQQLAYIQFITNYQHSSGTIRTRVTTVANQLQSFGSPLIAASFDQEAAAVLISRIAVHKAETEEGPDVIKWIDRTLIKLCQKYADYNKNDPSSFRLAGNFSLFPQFMYYLRRSQFLSVFNNSPDETAFYRHIFTREDTTNSLIMIQPTLTSFSMESEPEPVLLDSLSVKADTILLLDTFFYILIYHGETIAQWRKAGYQDDPQYADFKELLEEPKLEAAELLVDRFPLPRFIDTEAGGSQARFLLSKLNPSDSYQNMNSAGATIVLTDDISLQNFMLHLQQSVVNTQK.

Cysteine 56, cysteine 61, cysteine 80, and cysteine 83 together coordinate Zn(2+).

This sequence belongs to the SEC23/SEC24 family. SEC23 subfamily. In terms of assembly, the COPII coat is composed of at least 5 proteins: the SEC23/24 complex, the SEC13/31 complex, and the protein SAR1.

Its subcellular location is the cytoplasm. It localises to the cytoplasmic vesicle. The protein localises to the COPII-coated vesicle membrane. The protein resides in the endoplasmic reticulum membrane. It is found in the golgi apparatus membrane. Its function is as follows. Component of the coat protein complex II (COPII) which promotes the formation of transport vesicles from the endoplasmic reticulum (ER). The coat has two main functions, the physical deformation of the endoplasmic reticulum membrane into vesicles and the selection of cargo molecules. In Candida glabrata (strain ATCC 2001 / BCRC 20586 / JCM 3761 / NBRC 0622 / NRRL Y-65 / CBS 138) (Yeast), this protein is Protein transport protein SEC23-1 (SEC231).